The sequence spans 342 residues: Erlin-1 (342 aa).

At 1–6 (MAHVGA) the chain is on the cytoplasmic side. A helical membrane pass occupies residues 7-23 (VVAAMAGLMAILLHSSI). Over 24 to 342 (HKIEEGHLAV…ASKPKASEGH (319 aa)) the chain is Lumenal. Asn106 carries N-linked (GlcNAc...) asparagine glycosylation. The segment at 308 to 342 (SSASRPAAGESEQLESLSMRESLKKASKPKASEGH) is disordered.

This sequence belongs to the band 7/mec-2 family.

It is found in the endoplasmic reticulum membrane. In terms of biological role, mediates the endoplasmic reticulum-associated degradation (ERAD) of inositol 1,4,5-trisphosphate receptors (IP3Rs). Involved in regulation of cellular cholesterol homeostasis by regulation the SREBP signaling pathway. Binds cholesterol and may promote ER retention of the SCAP-SREBF complex. The protein is Erlin-1 of Danio rerio (Zebrafish).